Reading from the N-terminus, the 961-residue chain is Alanine--tRNA ligase, chloroplastic/mitochondrial (961 aa).

Positions 641, 645, 743, and 747 each coordinate Zn(2+).

It belongs to the class-II aminoacyl-tRNA synthetase family. As to quaternary structure, monomer. The cofactor is Zn(2+).

It localises to the plastid. It is found in the chloroplast. The protein localises to the mitochondrion. It carries out the reaction tRNA(Ala) + L-alanine + ATP = L-alanyl-tRNA(Ala) + AMP + diphosphate. In terms of biological role, catalyzes the attachment of alanine to tRNA(Ala) in a two-step reaction: alanine is first activated by ATP to form Ala-AMP and then transferred to the acceptor end of tRNA(Ala). Also edits incorrectly charged tRNA(Ala) via its editing domain. This chain is Alanine--tRNA ligase, chloroplastic/mitochondrial, found in Sorghum bicolor (Sorghum).